Reading from the N-terminus, the 431-residue chain is Trigger factor (431 aa).

The PPIase FKBP-type domain maps to 164 to 249 (GNIAVIDFKG…IKEIKVKELP (86 aa)).

Belongs to the FKBP-type PPIase family. Tig subfamily.

It is found in the cytoplasm. The enzyme catalyses [protein]-peptidylproline (omega=180) = [protein]-peptidylproline (omega=0). In terms of biological role, involved in protein export. Acts as a chaperone by maintaining the newly synthesized protein in an open conformation. Functions as a peptidyl-prolyl cis-trans isomerase. This is Trigger factor from Clostridium tetani (strain Massachusetts / E88).